Reading from the N-terminus, the 228-residue chain is UPF0758 protein CLI_3057 (228 aa).

The region spanning 106-228 (KINTPLDVSN…YVSMKEKGTI (123 aa)) is the MPN domain. His177, His179, and Asp190 together coordinate Zn(2+). A JAMM motif motif is present at residues 177–190 (HNHPSGDPTPSKED).

This sequence belongs to the UPF0758 family.

This chain is UPF0758 protein CLI_3057, found in Clostridium botulinum (strain Langeland / NCTC 10281 / Type F).